The sequence spans 601 residues: Elongation factor 4 (601 aa).

The 183-residue stretch at 6-188 (EHIRNFSIIA…EIVRKIPAPE (183 aa)) folds into the tr-type G domain. Residues 18–23 (DHGKST) and 135–138 (NKID) each bind GTP.

This sequence belongs to the TRAFAC class translation factor GTPase superfamily. Classic translation factor GTPase family. LepA subfamily.

It is found in the cell inner membrane. It catalyses the reaction GTP + H2O = GDP + phosphate + H(+). In terms of biological role, required for accurate and efficient protein synthesis under certain stress conditions. May act as a fidelity factor of the translation reaction, by catalyzing a one-codon backward translocation of tRNAs on improperly translocated ribosomes. Back-translocation proceeds from a post-translocation (POST) complex to a pre-translocation (PRE) complex, thus giving elongation factor G a second chance to translocate the tRNAs correctly. Binds to ribosomes in a GTP-dependent manner. The protein is Elongation factor 4 of Hydrogenovibrio crunogenus (strain DSM 25203 / XCL-2) (Thiomicrospira crunogena).